A 671-amino-acid chain; its full sequence is DNA ligase (671 aa).

Residues 32-36 (DAEYD), 81-82 (SL), and Glu113 each bind NAD(+). Lys115 (N6-AMP-lysine intermediate) is an active-site residue. NAD(+)-binding residues include Arg136, Glu173, Lys290, and Lys314. Zn(2+)-binding residues include Cys408, Cys411, Cys426, and Cys432. Residues 593-671 (EIDSPFAGKT…ETEMLHLLGS (79 aa)) enclose the BRCT domain.

Belongs to the NAD-dependent DNA ligase family. LigA subfamily. Requires Mg(2+) as cofactor. It depends on Mn(2+) as a cofactor.

The enzyme catalyses NAD(+) + (deoxyribonucleotide)n-3'-hydroxyl + 5'-phospho-(deoxyribonucleotide)m = (deoxyribonucleotide)n+m + AMP + beta-nicotinamide D-nucleotide.. In terms of biological role, DNA ligase that catalyzes the formation of phosphodiester linkages between 5'-phosphoryl and 3'-hydroxyl groups in double-stranded DNA using NAD as a coenzyme and as the energy source for the reaction. It is essential for DNA replication and repair of damaged DNA. This chain is DNA ligase, found in Escherichia coli O6:K15:H31 (strain 536 / UPEC).